A 475-amino-acid polypeptide reads, in one-letter code: uncharacterized protein (475 aa).

The disordered stretch occupies residues 42–292 (NLQNSLTGKT…NTRKGQRHNN (251 aa)). Basic and acidic residues-rich tracts occupy residues 59–72 (EANH…KSED) and 119–134 (IAEK…DDSQ). 2 stretches are compositionally biased toward polar residues: residues 150–159 (ITPNFTHTPI) and 220–242 (NNTF…TSED). A compositionally biased stretch (low complexity) spans 243 to 263 (SSSQAPHHSSSSGHAPSQQGG). Positions 277–289 (FHHKGRNTRKGQR) are enriched in basic residues. The HTH La-type RNA-binding domain occupies 319–408 (NPYLCDVQAF…MSIKVRRKET (90 aa)). Phosphothreonine is present on threonine 408. Serine 410 carries the phosphoserine modification.

Its subcellular location is the cytoplasm. This is an uncharacterized protein from Schizosaccharomyces pombe (strain 972 / ATCC 24843) (Fission yeast).